Reading from the N-terminus, the 274-residue chain is tRNA-cytidine(32) 2-sulfurtransferase (274 aa).

Residues 40–45 (SGGKDS) carry the PP-loop motif motif. Residues Cys-115, Cys-118, and Cys-206 each contribute to the [4Fe-4S] cluster site.

It belongs to the TtcA family. As to quaternary structure, homodimer. Mg(2+) serves as cofactor. It depends on [4Fe-4S] cluster as a cofactor.

Its subcellular location is the cytoplasm. It carries out the reaction cytidine(32) in tRNA + S-sulfanyl-L-cysteinyl-[cysteine desulfurase] + AH2 + ATP = 2-thiocytidine(32) in tRNA + L-cysteinyl-[cysteine desulfurase] + A + AMP + diphosphate + H(+). The protein operates within tRNA modification. In terms of biological role, catalyzes the ATP-dependent 2-thiolation of cytidine in position 32 of tRNA, to form 2-thiocytidine (s(2)C32). The sulfur atoms are provided by the cysteine/cysteine desulfurase (IscS) system. This Pseudomonas syringae pv. syringae (strain B728a) protein is tRNA-cytidine(32) 2-sulfurtransferase.